Reading from the N-terminus, the 939-residue chain is Probable importin ECU10_0620 (939 aa).

An Importin N-terminal domain is found at 23 to 90 (AEAMLMDLEK…VENILDLFLY (68 aa)).

Belongs to the importin beta family.

It is found in the nucleus. The protein resides in the cytoplasm. In terms of biological role, active in protein import into the nucleus. The polypeptide is Probable importin ECU10_0620 (Encephalitozoon cuniculi (strain GB-M1) (Microsporidian parasite)).